Reading from the N-terminus, the 157-residue chain is Ribosomal RNA large subunit methyltransferase H (157 aa).

S-adenosyl-L-methionine is bound by residues leucine 73, glycine 105, and 124-129 (LSKMTF).

The protein belongs to the RNA methyltransferase RlmH family. Homodimer.

It localises to the cytoplasm. It catalyses the reaction pseudouridine(1915) in 23S rRNA + S-adenosyl-L-methionine = N(3)-methylpseudouridine(1915) in 23S rRNA + S-adenosyl-L-homocysteine + H(+). Specifically methylates the pseudouridine at position 1915 (m3Psi1915) in 23S rRNA. The protein is Ribosomal RNA large subunit methyltransferase H of Parabacteroides distasonis (strain ATCC 8503 / DSM 20701 / CIP 104284 / JCM 5825 / NCTC 11152).